A 948-amino-acid chain; its full sequence is Zinc finger CCCH domain-containing protein 3 (948 aa).

4 disordered regions span residues 25 to 108, 121 to 219, 265 to 296, and 336 to 493; these read HGNA…VPQQ, QNVV…RRTV, VDAG…REAS, and NVCK…LKKT. Residues 56–74 are compositionally biased toward basic residues; the sequence is RPSRRGYSSHHGPSWRKKY. The segment covering 128–141 has biased composition (low complexity); it reads KPPSKSGSASASGA. Over residues 157 to 166 the composition is skewed to basic and acidic residues; the sequence is QRPREGEGEP. Residues 372-398 are compositionally biased toward low complexity; the sequence is SAPSKYKWKASSPSASSSSSFRWQSEA. Over residues 405–415 the composition is skewed to polar residues; sequence SQLSPVLSRSP. Residue S408 is modified to Phosphoserine. Over residues 441 to 452 the composition is skewed to basic residues; it reads VKSRTKIIRRRS. 5 consecutive C3H1-type zinc fingers follow at residues 667 to 695, 699 to 722, 723 to 749, 750 to 777, and 778 to 800; these read EKRK…HDPE, VCTR…HHVS, KEKM…HVYV, SRKA…HTLL, and CPDF…HRTQ. Disordered stretches follow at residues 798–891 and 913–948; these read RTQK…HEAP and ISLQ…KPRL. The span at 834–846 shows a compositional bias: polar residues; the sequence is SASQRPTRQTPSS. 2 stretches are compositionally biased toward low complexity: residues 847-856 and 864-885; these read AALTAAAVAA and SASP…PPAS. Phosphoserine occurs at positions 918 and 920.

Interacts with SMAD1, SMAD3, SMAD4, CPSF2 and CPSF3.

The protein localises to the nucleus. In terms of biological role, required for the export of polyadenylated mRNAs from the nucleus. Enhances ACVR1B-induced SMAD-dependent transcription. Binds to single-stranded DNA but not to double-stranded DNA in vitro. Involved in RNA cleavage. The protein is Zinc finger CCCH domain-containing protein 3 (ZC3H3) of Homo sapiens (Human).